The following is a 315-amino-acid chain: Malate dehydrogenase (315 aa).

NAD(+) is bound by residues 11–16 and D35; that span reads GAGHVG. Substrate is bound by residues R84 and R90. NAD(+)-binding positions include N97 and 120 to 122; that span reads VTN. Substrate is bound by residues N122 and R153. The active-site Proton acceptor is the H177.

The protein belongs to the LDH/MDH superfamily. MDH type 3 family.

The enzyme catalyses (S)-malate + NAD(+) = oxaloacetate + NADH + H(+). Catalyzes the reversible oxidation of malate to oxaloacetate. The sequence is that of Malate dehydrogenase from Thermosulfidibacter takaii (strain DSM 17441 / JCM 13301 / NBRC 103674 / ABI70S6).